Reading from the N-terminus, the 152-residue chain is Phospholipase A2 GL16-1 (152 aa).

The first 21 residues, 1–21 (MNPAHLLVLLAVCVSLLGAST), serve as a signal peptide directing secretion. Residues 22-27 (IPPLPL) constitute a propeptide that is removed on maturation. 7 disulfides stabilise this stretch: C38–C104, C54–C151, C56–C72, C71–C132, C78–C125, C88–C118, and C111–C123. Y55, G57, and G59 together coordinate Ca(2+). The active site involves H75. Position 76 (D76) interacts with Ca(2+). Residue D126 is part of the active site.

This sequence belongs to the phospholipase A2 family. Group I subfamily. Ca(2+) serves as cofactor.

It is found in the secreted. The enzyme catalyses a 1,2-diacyl-sn-glycero-3-phosphocholine + H2O = a 1-acyl-sn-glycero-3-phosphocholine + a fatty acid + H(+). Its function is as follows. PA2 catalyzes the calcium-dependent hydrolysis of the 2-acyl groups in 3-sn-phosphoglycerides. The sequence is that of Phospholipase A2 GL16-1 from Laticauda semifasciata (Black-banded sea krait).